Reading from the N-terminus, the 228-residue chain is uncharacterized protein (228 aa).

5 consecutive transmembrane segments (helical) span residues H14–V34, V42–L62, F130–S150, F156–M176, and I192–L212.

It belongs to the AzlC family.

Its subcellular location is the cell membrane. This is an uncharacterized protein from Helicobacter pylori (strain ATCC 700392 / 26695) (Campylobacter pylori).